The primary structure comprises 1241 residues: DNA-directed RNA polymerase subunit beta (1241 aa).

A disordered region spans residues 1195 to 1219; sequence PQDVQENVSGENVDAGYENEDVDID.

The protein belongs to the RNA polymerase beta chain family. In terms of assembly, the RNAP catalytic core consists of 2 alpha, 1 beta, 1 beta' and 1 omega subunit. When a sigma factor is associated with the core the holoenzyme is formed, which can initiate transcription.

It catalyses the reaction RNA(n) + a ribonucleoside 5'-triphosphate = RNA(n+1) + diphosphate. Functionally, DNA-dependent RNA polymerase catalyzes the transcription of DNA into RNA using the four ribonucleoside triphosphates as substrates. The polypeptide is DNA-directed RNA polymerase subunit beta (Clostridium acetobutylicum (strain ATCC 824 / DSM 792 / JCM 1419 / IAM 19013 / LMG 5710 / NBRC 13948 / NRRL B-527 / VKM B-1787 / 2291 / W)).